The sequence spans 136 residues: Diuretic hormone 41 (136 aa).

A signal peptide spans 1 to 26; that stretch reads MMWWAVWCAAMVAGSVFTAAAPPTDS. Residues 27 to 76 constitute a propeptide that is removed on maturation; it reads IDLMQMDPSLADDESLGFAMQSLSGRYAAAPWLYLLADVSHDPQNGSDRV. Residue Ile-119 is modified to Isoleucine amide. The propeptide occupies 123 to 136; sequence GFHWAPSAKAAKFY.

This sequence belongs to the sauvagine/corticotropin-releasing factor/urotensin I family.

It is found in the secreted. Functionally, regulation of fluid secretion. The sequence is that of Diuretic hormone 41 (dh41) from Bombyx mori (Silk moth).